A 517-amino-acid polypeptide reads, in one-letter code: Amidophosphoribosyltransferase (517 aa).

Met1 is modified (N-acetylmethionine). Residues 1–11 constitute a propeptide that is removed on maturation; that stretch reads MELEELGIREE. Cys12 functions as the Nucleophile in the catalytic mechanism. Positions 12-261 constitute a Glutamine amidotransferase type-2 domain; sequence CGVFGCIASG…PGEIVEISRH (250 aa). A [4Fe-4S] cluster-binding site is contributed by Cys280. Ser327, Asp389, and Asp390 together coordinate Mg(2+). [4Fe-4S] cluster contacts are provided by Cys426, Cys503, and Cys506.

This sequence in the C-terminal section; belongs to the purine/pyrimidine phosphoribosyltransferase family. Homotetramer. Mg(2+) serves as cofactor. It depends on [4Fe-4S] cluster as a cofactor. Ubiquitously expressed.

The enzyme catalyses 5-phospho-beta-D-ribosylamine + L-glutamate + diphosphate = 5-phospho-alpha-D-ribose 1-diphosphate + L-glutamine + H2O. Its pathway is purine metabolism; IMP biosynthesis via de novo pathway; N(1)-(5-phospho-D-ribosyl)glycinamide from 5-phospho-alpha-D-ribose 1-diphosphate: step 1/2. In terms of biological role, catalyzes the formation of phosphoribosylamine from phosphoribosylpyrophosphate (PRPP) and glutamine. The polypeptide is Amidophosphoribosyltransferase (PPAT) (Homo sapiens (Human)).